The chain runs to 94 residues: Beta-diguetoxin-Dc1a (94 aa).

Residues 1 to 17 (MKVFVVLLCLSLAAVYA) form the signal peptide. The propeptide occupies 18-38 (LEERLDKDADIMLDSPADMER). 4 disulfide bridges follow: Cys-50–Cys-63, Cys-57–Cys-77, Cys-62–Cys-91, and Cys-79–Cys-89.

It belongs to the neurotoxin 26 (DTX) family. As to expression, expressed by the venom gland.

The protein localises to the secreted. Insecticidal toxin. This toxin promotes opening of insect Nav channels. The toxin binds to the S1-S2 and S3-S4 loops in the domain II voltage-sensor of insect Nav channels (i.e., receptor site 4). The American cockroach P.americana is largely resistant to the effects of this toxin due to an unusual sequence within the domain II S1-S2 loop. In vivo, paralyzes lepidopteran and dipteran larvae. Paralyzed insects ultimately die from secondary effects of starvation and dehydration. In Diguetia canities (Desert bush spider), this protein is Beta-diguetoxin-Dc1a.